We begin with the raw amino-acid sequence, 463 residues long: L-seryl-tRNA(Sec) selenium transferase (463 aa).

The residue at position 295 (lysine 295) is an N6-(pyridoxal phosphate)lysine.

It belongs to the SelA family. In terms of assembly, homodecamer; pentamer of dimers. Binds only one seryl-tRNA(Sec) per dimer. Pyridoxal 5'-phosphate serves as cofactor.

Its subcellular location is the cytoplasm. The catalysed reaction is L-seryl-tRNA(Sec) + selenophosphate + H(+) = L-selenocysteinyl-tRNA(Sec) + phosphate. It participates in aminoacyl-tRNA biosynthesis; selenocysteinyl-tRNA(Sec) biosynthesis; selenocysteinyl-tRNA(Sec) from L-seryl-tRNA(Sec) (bacterial route): step 1/1. Functionally, converts seryl-tRNA(Sec) to selenocysteinyl-tRNA(Sec) required for selenoprotein biosynthesis. The protein is L-seryl-tRNA(Sec) selenium transferase of Salmonella arizonae (strain ATCC BAA-731 / CDC346-86 / RSK2980).